We begin with the raw amino-acid sequence, 382 residues long: ATP phosphoribosyltransferase regulatory subunit (382 aa).

It belongs to the class-II aminoacyl-tRNA synthetase family. HisZ subfamily. Heteromultimer composed of HisG and HisZ subunits.

It localises to the cytoplasm. The protein operates within amino-acid biosynthesis; L-histidine biosynthesis; L-histidine from 5-phospho-alpha-D-ribose 1-diphosphate: step 1/9. Its function is as follows. Required for the first step of histidine biosynthesis. May allow the feedback regulation of ATP phosphoribosyltransferase activity by histidine. This Lacticaseibacillus casei (strain BL23) (Lactobacillus casei) protein is ATP phosphoribosyltransferase regulatory subunit.